Here is a 150-residue protein sequence, read N- to C-terminus: 6,7-dimethyl-8-ribityllumazine synthase (150 aa).

5-amino-6-(D-ribitylamino)uracil-binding positions include F11, 43–45, and 67–69; these read VYD and AVI. Residue 72–73 coordinates (2S)-2-hydroxy-3-oxobutyl phosphate; the sequence is AT. H75 serves as the catalytic Proton donor. L100 is a binding site for 5-amino-6-(D-ribitylamino)uracil. Residue R115 coordinates (2S)-2-hydroxy-3-oxobutyl phosphate.

The protein belongs to the DMRL synthase family.

It carries out the reaction (2S)-2-hydroxy-3-oxobutyl phosphate + 5-amino-6-(D-ribitylamino)uracil = 6,7-dimethyl-8-(1-D-ribityl)lumazine + phosphate + 2 H2O + H(+). It participates in cofactor biosynthesis; riboflavin biosynthesis; riboflavin from 2-hydroxy-3-oxobutyl phosphate and 5-amino-6-(D-ribitylamino)uracil: step 1/2. In terms of biological role, catalyzes the formation of 6,7-dimethyl-8-ribityllumazine by condensation of 5-amino-6-(D-ribitylamino)uracil with 3,4-dihydroxy-2-butanone 4-phosphate. This is the penultimate step in the biosynthesis of riboflavin. The polypeptide is 6,7-dimethyl-8-ribityllumazine synthase (Pyrobaculum aerophilum (strain ATCC 51768 / DSM 7523 / JCM 9630 / CIP 104966 / NBRC 100827 / IM2)).